We begin with the raw amino-acid sequence, 517 residues long: MNKTIILLLISIIFEIVISSSVDGNYPAGGLYFGVSSNFLVGESEKFTQYVQDELLAMDLPDQSGDSDGVQYSFTHFKLALNLQDFFYAQLGPGVFQMGWDTITFNLQWEYEICVKKVVKLCESGTITVYTASGQSVSLGTTLDVLFNSSNAKIEATSTVMPFEAGAVVASVHCTDSVCLIPINDIVSEVSSQFVSQVTNGVTKAINDKAPSIEQLFTPIKQIPITMDSGNQYWIDLEGCLVEANYSSNSPSTITAAINGGIVLENTDGNFVYPTQTPSYVPYDSQMESFTSDYCITITGYFIETLLDAVLVPEFPMTIQPSQIPASSPVQLNTSSDFFSGIAPNLTSKYPNVGIQVNLMPPTIPTVTINSSAIILTDFEISTSFLVLTDNDDAIPVFNVLFKFDAEIQTTLYTDSVSVFSLNSTLLSITPNVTITDSNVGSVDATGFVQLIEMAQSIIKIPSITYPVPSKYSITNVNSQLGDQIIQLTFDLIENSTNQKYLKKSVNLNLKKKKKKK.

An N-terminal signal peptide occupies residues 1–19 (MNKTIILLLISIIFEIVIS). N-linked (GlcNAc...) asparagine glycans are attached at residues Asn-148, Asn-245, Asn-333, Asn-345, Asn-370, Asn-423, Asn-432, and Asn-495.

The protein belongs to the UPF0522 family.

The protein localises to the secreted. This Dictyostelium discoideum (Social amoeba) protein is UPF0522 protein B.